A 517-amino-acid chain; its full sequence is Ribose import ATP-binding protein RbsA 2 (517 aa).

2 ABC transporter domains span residues 10–245 (LRIE…GRSI) and 255–498 (DAGE…VSTH). Position 42 to 49 (42 to 49 (GENGAGKS)) interacts with ATP. The tract at residues 497–517 (THTGNSPHSGGTDGTEASRGH) is disordered.

Belongs to the ABC transporter superfamily. Ribose importer (TC 3.A.1.2.1) family. In terms of assembly, the complex is composed of an ATP-binding protein (RbsA), two transmembrane proteins (RbsC) and a solute-binding protein (RbsB).

The protein localises to the cell membrane. The enzyme catalyses D-ribose(out) + ATP + H2O = D-ribose(in) + ADP + phosphate + H(+). Part of the ABC transporter complex RbsABC involved in ribose import. Responsible for energy coupling to the transport system. This chain is Ribose import ATP-binding protein RbsA 2, found in Streptomyces coelicolor (strain ATCC BAA-471 / A3(2) / M145).